Reading from the N-terminus, the 280-residue chain is MVARRRKCAARDPEDRIPSPLGYAAIPIKFSEKQQASHYLYVRAHGVRQGTKSTWPQKRTLFVLNVPPYCTEESLSRLLSTCGLVQSVELQEKPDLAESPKESRSKFFHPKPVPGFQVAYVVFQKPSGVSAALALKGPLLVSTESHPVKSGIHKWISDYADSVPDPEALRVEVDTFMEAYDQKIAEEEAKAKEEEGVPDEEGWVKVTRRGRRPVLPRTEAASLRVLERERRKRSRKELLNFYAWQHRESKMEHLAQLRKKFEEDKQRIELLRAQRKFRPY.

The 101-residue stretch at 59–159 (RTLFVLNVPP…SGIHKWISDY (101 aa)) folds into the RRM domain. A Phosphoserine modification is found at Ser-99.

This sequence belongs to the RRP7 family. Part of the small subunit (SSU) processome, composed of more than 70 proteins and the RNA chaperone small nucleolar RNA (snoRNA) U3. Interacts with NOL6; required for NOL6 localization to nucleolus. As to expression, expressed in the apical radial glial cells in the developing brain.

The protein localises to the nucleus. The protein resides in the nucleolus. It localises to the cell projection. Its subcellular location is the cilium. It is found in the cytoplasm. The protein localises to the cytoskeleton. The protein resides in the microtubule organizing center. It localises to the centrosome. Nucleolar protein that is involved in ribosomal RNA (rRNA) processing. Also plays a role in primary cilia resorption, and cell cycle progression in neurogenesis and neocortex development. Part of the small subunit (SSU) processome, first precursor of the small eukaryotic ribosomal subunit. During the assembly of the SSU processome in the nucleolus, many ribosome biogenesis factors, an RNA chaperone and ribosomal proteins associate with the nascent pre-rRNA and work in concert to generate RNA folding, modifications, rearrangements and cleavage as well as targeted degradation of pre-ribosomal RNA by the RNA exosome. This Homo sapiens (Human) protein is Ribosomal RNA-processing protein 7 homolog A.